Reading from the N-terminus, the 93-residue chain is UPF0367 protein tsr0804 (93 aa).

It belongs to the UPF0367 family.

This is UPF0367 protein tsr0804 from Thermosynechococcus vestitus (strain NIES-2133 / IAM M-273 / BP-1).